A 688-amino-acid chain; its full sequence is GTPase IMAP family member 8 (688 aa).

Positions 1 to 14 (MATSSHQGAAAGSQ) are enriched in low complexity. The segment at 1–42 (MATSSHQGAAAGSQAEHRSCEASVGQGERPSASQGQEGNFKQ) is disordered. Residues 31–42 (SASQGQEGNFKQ) show a composition bias toward polar residues. 3 AIG1-type G domains span residues 46-247 (TSTL…MESS), 282-472 (MPEL…VIRE), and 473-677 (KELL…GQLK). Residues 55 to 62 (GKQGAGKS) form a G1 region. GTP-binding positions include 55–63 (GKQGAGKSA) and serine 76. Residues 82–86 (MVTDR) form a G2 region. The segment at 103 to 106 (DTPD) is G3. The segment at 172-175 (TRED) is G4. GTP is bound by residues 173–175 (RED) and asparagine 209. The segment at 208–210 (NNK) is G5.

The protein belongs to the TRAFAC class TrmE-Era-EngA-EngB-Septin-like GTPase superfamily. AIG1/Toc34/Toc159-like paraseptin GTPase family. IAN subfamily. In terms of tissue distribution, abundantly expressed in the thymus (in thymocytes), spleen (in splenocytes), lymph node, followed by bone marrow and lung.

It is found in the endoplasmic reticulum. Its subcellular location is the golgi apparatus. It localises to the mitochondrion. The protein localises to the cytoplasm. The protein resides in the cytosol. Functionally, exerts an anti-apoptotic effect in the immune system and is involved in responses to infections. The sequence is that of GTPase IMAP family member 8 (Gimap8) from Mus musculus (Mouse).